A 397-amino-acid chain; its full sequence is Dual-specificity RNA methyltransferase RlmN (397 aa).

The Proton acceptor role is filled by Glu120. A Radical SAM core domain is found at 126 to 369; it reads ETDRGTLCVS…VRTPRGRDIL (244 aa). A disulfide bridge links Cys133 with Cys372. Positions 140, 144, and 147 each coordinate [4Fe-4S] cluster. Residues 198 to 199, Ser230, 252 to 254, and Asn329 each bind S-adenosyl-L-methionine; these read GE and SLH. Cys372 serves as the catalytic S-methylcysteine intermediate.

Belongs to the radical SAM superfamily. RlmN family. The cofactor is [4Fe-4S] cluster.

Its subcellular location is the cytoplasm. It catalyses the reaction adenosine(2503) in 23S rRNA + 2 reduced [2Fe-2S]-[ferredoxin] + 2 S-adenosyl-L-methionine = 2-methyladenosine(2503) in 23S rRNA + 5'-deoxyadenosine + L-methionine + 2 oxidized [2Fe-2S]-[ferredoxin] + S-adenosyl-L-homocysteine. The catalysed reaction is adenosine(37) in tRNA + 2 reduced [2Fe-2S]-[ferredoxin] + 2 S-adenosyl-L-methionine = 2-methyladenosine(37) in tRNA + 5'-deoxyadenosine + L-methionine + 2 oxidized [2Fe-2S]-[ferredoxin] + S-adenosyl-L-homocysteine. In terms of biological role, specifically methylates position 2 of adenine 2503 in 23S rRNA and position 2 of adenine 37 in tRNAs. m2A2503 modification seems to play a crucial role in the proofreading step occurring at the peptidyl transferase center and thus would serve to optimize ribosomal fidelity. In Nitrobacter winogradskyi (strain ATCC 25391 / DSM 10237 / CIP 104748 / NCIMB 11846 / Nb-255), this protein is Dual-specificity RNA methyltransferase RlmN.